The following is a 283-amino-acid chain: MKISFSESQKLFAYFSGLIAALSLFIYYVSAQQSEGALILCITFGVIAAGIWFGPIYALAVTLIVLFVLGTLMMFFQTGQTSLFPAEEGLRMLVVWGIALLLFSFISGRIHDITAELRRSMTRLQSEIKSYVAVDRVTGFDNKQRMKLELSEEIKRAERYGNSFVFLLLHMHYFKEFKSLYGEKETDRLFQYVGQQIRTSVRETDKKFRPSDERIGIVLTHTPAEHMPAVLTKLKKQLDTYQLENGKYVSLTFHVCYLPYRNDIQTADQFLEELENEMMMNEL.

4 consecutive transmembrane segments (helical) span residues 11-31 (LFAY…YVSA), 35-55 (EGAL…WFGP), 56-76 (IYAL…MMFF), and 93-113 (LVVW…IHDI). Residues 162–283 (NSFVFLLLHM…LENEMMMNEL (122 aa)) form the GGDEF domain.

The protein localises to the cell membrane. This is an uncharacterized protein from Bacillus subtilis (strain 168).